The sequence spans 439 residues: Ribulose bisphosphate carboxylase/oxygenase activase, chloroplastic (439 aa).

An ATP-binding site is contributed by 167–174 (GGKGQGKS).

Belongs to the RuBisCO activase family.

Its subcellular location is the plastid. The protein localises to the chloroplast stroma. Functionally, activation of RuBisCO (ribulose-1,5-bisphosphate carboxylase/oxygenase; EC 4.1.1.39) involves the ATP-dependent carboxylation of the epsilon-amino group of lysine leading to a carbamate structure. The polypeptide is Ribulose bisphosphate carboxylase/oxygenase activase, chloroplastic (RCA) (Vigna radiata var. radiata (Mung bean)).